We begin with the raw amino-acid sequence, 471 residues long: Probable lysophospholipase BODYGUARD 2 (471 aa).

Positions Met1–Tyr45 are cleaved as a signal peptide. Cys46 is lipidated: N-palmitoyl cysteine. One can recognise an AB hydrolase-1 domain in the interval Val193 to Pro296. His197 is a catalytic residue. The Nucleophile role is filled by Ser271. Residues Asp418 and His446 each act as charge relay system in the active site.

It localises to the cell membrane. It is found in the secreted. The protein resides in the cell wall. Its function is as follows. Involved in cuticle development and morphogenesis. This is Probable lysophospholipase BODYGUARD 2 from Arabidopsis thaliana (Mouse-ear cress).